Reading from the N-terminus, the 271-residue chain is Ubiquitin thioesterase OTUB1 (271 aa).

The residue at position 2 (alanine 2) is an N-acetylalanine. Residue serine 16 is modified to Phosphoserine. Tyrosine 26 is modified (phosphotyrosine). The 192-residue stretch at 80–271 folds into the OTU domain; the sequence is SYIRKTRPDG…RPGHYDILYK (192 aa). The active site involves aspartate 88. Cysteine 91 acts as the Nucleophile in catalysis. Ubiquitin-conjugating enzyme E2 binding regions lie at residues 130-138 and 169-177; these read FTEFTIEDF and DYLVVYLRL. Positions 189–195 are free ubiquitin binding; that stretch reads FFEHFIE. The ubiquitin-conjugating enzyme E2 binding stretch occupies residues 206–213; that stretch reads QEVEPMCK. 2 free ubiquitin binding regions span residues 214-221 and 245-251; these read ESDHIHII and NPHVFPE. The active site involves histidine 265.

It belongs to the peptidase C65 family. As to quaternary structure, interacts with RNF128. Forms a ternary complex with RNF128 and USP8. Interacts with FUS and RACK1. Interacts with UBE2D1/UBCH5A, UBE2W/UBC16 and UBE2N/UBC13. In terms of processing, phosphorylation at Tyr-26 by SRC and SRMS promotes deubiquitination of RPTOR via a non-catalytic process.

The protein resides in the cytoplasm. It catalyses the reaction Thiol-dependent hydrolysis of ester, thioester, amide, peptide and isopeptide bonds formed by the C-terminal Gly of ubiquitin (a 76-residue protein attached to proteins as an intracellular targeting signal).. By free ubiquitin: binding of free ubiquitin triggers conformational changes in the OTU domain and formation of a ubiquitin-binding helix in the N-terminus, promoting binding of the conjugated donor ubiquitin in UBE2N/UBC13 to OTUB1. In terms of biological role, hydrolase that can specifically remove compared to 'Lys-48'-linked conjugated ubiquitin from proteins and plays an important regulatory role at the level of protein turnover by preventing degradation. Regulator of T-cell anergy, a phenomenon that occurs when T-cells are rendered unresponsive to antigen rechallenge and no longer respond to their cognate antigen. Acts via its interaction with RNF128/GRAIL. Surprisingly, it regulates RNF128-mediated ubiquitination, but does not deubiquitinate polyubiquitinated RNF128. Deubiquitinates estrogen receptor alpha (ESR1). Mediates deubiquitination of 'Lys-48'-linked polyubiquitin chains, but not 'Lys-63'-linked polyubiquitin chains. Not able to cleave di-ubiquitin. Also capable of removing NEDD8 from NEDD8 conjugates, but with a much lower preference compared to 'Lys-48'-linked ubiquitin. Plays a key non-catalytic role in DNA repair regulation by inhibiting activity of RNF168, an E3 ubiquitin-protein ligase that promotes accumulation of 'Lys-63'-linked histone H2A and H2AX at DNA damage sites. Inhibits RNF168 independently of ubiquitin thioesterase activity by binding and inhibiting UBE2N/UBC13, the E2 partner of RNF168, thereby limiting spreading of 'Lys-63'-linked histone H2A and H2AX marks. Inhibition occurs by binding to free ubiquitin: free ubiquitin acts as an allosteric regulator that increases affinity for UBE2N/UBC13 and disrupts interaction with UBE2V1. The OTUB1-UBE2N/UBC13-free ubiquitin complex adopts a configuration that mimics a cleaved 'Lys48'-linked di-ubiquitin chain. Acts as a regulator of mTORC1 and mTORC2 complexes. When phosphorylated at Tyr-26, acts as an activator of the mTORC1 complex by mediating deubiquitination of RPTOR via a non-catalytic process: acts by binding and inhibiting the activity of the ubiquitin-conjugating enzyme E2 (UBE2D1/UBCH5A, UBE2W/UBC16 and UBE2N/UBC13), thereby preventing ubiquitination of RPTOR. Can also act as an inhibitor of the mTORC1 and mTORC2 complexes in response to amino acids by mediating non-catalytic deubiquitination of DEPTOR. The sequence is that of Ubiquitin thioesterase OTUB1 (Otub1) from Mus musculus (Mouse).